The primary structure comprises 84 residues: UPF0457 protein BALH_2270 (84 aa).

This sequence belongs to the UPF0457 family.

The sequence is that of UPF0457 protein BALH_2270 from Bacillus thuringiensis (strain Al Hakam).